Consider the following 210-residue polypeptide: 3-hexulose-6-phosphate synthase 3 (210 aa).

It belongs to the HPS/KGPDC family. HPS subfamily.

It carries out the reaction D-ribulose 5-phosphate + formaldehyde = D-arabino-hex-3-ulose 6-phosphate. The protein operates within one-carbon metabolism; formaldehyde assimilation via RuMP pathway; D-fructose 6-phosphate from D-ribulose 5-phosphate and formaldehyde: step 1/2. Functionally, catalyzes the condensation of ribulose 5-phosphate with formaldehyde to form 3-hexulose 6-phosphate. The polypeptide is 3-hexulose-6-phosphate synthase 3 (Staphylococcus saprophyticus subsp. saprophyticus (strain ATCC 15305 / DSM 20229 / NCIMB 8711 / NCTC 7292 / S-41)).